We begin with the raw amino-acid sequence, 331 residues long: Tetraacyldisaccharide 4'-kinase (331 aa).

Residue 55 to 62 participates in ATP binding; the sequence is SVGGNGKT.

Belongs to the LpxK family.

It catalyses the reaction a lipid A disaccharide + ATP = a lipid IVA + ADP + H(+). Its pathway is glycolipid biosynthesis; lipid IV(A) biosynthesis; lipid IV(A) from (3R)-3-hydroxytetradecanoyl-[acyl-carrier-protein] and UDP-N-acetyl-alpha-D-glucosamine: step 6/6. Transfers the gamma-phosphate of ATP to the 4'-position of a tetraacyldisaccharide 1-phosphate intermediate (termed DS-1-P) to form tetraacyldisaccharide 1,4'-bis-phosphate (lipid IVA). This Aeromonas salmonicida (strain A449) protein is Tetraacyldisaccharide 4'-kinase.